A 109-amino-acid polypeptide reads, in one-letter code: Cell division protein ZapA (109 aa).

The stretch at 22-99 (EQQDALNMAA…IEQALLEQGR (78 aa)) forms a coiled coil.

The protein belongs to the ZapA family. Type 1 subfamily. Homodimer. Interacts with FtsZ.

The protein resides in the cytoplasm. Activator of cell division through the inhibition of FtsZ GTPase activity, therefore promoting FtsZ assembly into bundles of protofilaments necessary for the formation of the division Z ring. It is recruited early at mid-cell but it is not essential for cell division. The polypeptide is Cell division protein ZapA (Yersinia enterocolitica serotype O:8 / biotype 1B (strain NCTC 13174 / 8081)).